A 186-amino-acid chain; its full sequence is Iodotyrosine deiodinase (186 aa).

FMN contacts are provided by residues 11–15 (RKTVR), 38–39 (PS), and Ser-39. 4 residues coordinate 3-iodo-L-tyrosine: Met-41, Glu-68, Tyr-72, and Lys-92. Residues Met-41, Glu-68, Tyr-72, and Lys-92 each contribute to the L-tyrosine site. An FMN-binding site is contributed by Arg-176.

Belongs to the nitroreductase family. Homodimer. FMN serves as cofactor.

It carries out the reaction 2 iodide + L-tyrosine + 2 NADP(+) = 3,5-diiodo-L-tyrosine + 2 NADPH + H(+). It catalyses the reaction iodide + L-tyrosine + NADP(+) = 3-iodo-L-tyrosine + NADPH. The enzyme catalyses 3-iodo-L-tyrosine + iodide + NADP(+) = 3,5-diiodo-L-tyrosine + NADPH + H(+). The catalysed reaction is L-tyrosine + chloride + NADP(+) = 3-chloro-L-tyrosine + NADPH. It carries out the reaction bromide + L-tyrosine + NADP(+) = 3-bromo-L-tyrosine + NADPH. In terms of biological role, catalyzes the dehalogenation of halotyrosines such as 3-bromo-L-tyrosine, 3-chloro-L-tyrosine, 3-iodo-L-tyrosine and 3,5-diiodo-L-tyrosine. Activity towards 2-iodophenol is weak. The sequence is that of Iodotyrosine deiodinase from Thermotoga neapolitana (strain ATCC 49049 / DSM 4359 / NBRC 107923 / NS-E).